Here is a 343-residue protein sequence, read N- to C-terminus: Photosystem II protein D1 (343 aa).

Helical transmembrane passes span 28 to 45 (YIGW…VSTV), 117 to 132 (HFLA…EYEY), and 141 to 155 (WIYL…AASA). His117 contributes to the chlorophyll a binding site. Trp125 provides a ligand contact to pheophytin a. [CaMn4O5] cluster-binding residues include Asp169 and Glu188. The chain crosses the membrane as a helical span at residues 196-217 (FHILGVSAVFGGSLFSAMHGSL). Residue His197 coordinates chlorophyll a. Residues His214 and 263-264 (SF) contribute to the a quinone site. His214 lines the Fe cation pocket. Residue His271 coordinates Fe cation. The chain crosses the membrane as a helical span at residues 273 to 287 (FLAAWPVIGIWCTAI). [CaMn4O5] cluster contacts are provided by His331, Glu332, Asp341, and Ala343.

The protein belongs to the reaction center PufL/M/PsbA/D family. PSII is composed of 1 copy each of membrane proteins PsbA, PsbB, PsbC, PsbD, PsbE, PsbF, PsbH, PsbI, PsbJ, PsbK, PsbL, PsbM, PsbT, PsbX, PsbY, PsbZ, Psb30/Ycf12, at least 3 peripheral proteins of the oxygen-evolving complex and a large number of cofactors. It forms dimeric complexes. The cofactor is The D1/D2 heterodimer binds P680, chlorophylls that are the primary electron donor of PSII, and subsequent electron acceptors. It shares a non-heme iron and each subunit binds pheophytin, quinone, additional chlorophylls, carotenoids and lipids. D1 provides most of the ligands for the Mn4-Ca-O5 cluster of the oxygen-evolving complex (OEC). There is also a Cl(-1) ion associated with D1 and D2, which is required for oxygen evolution. The PSII complex binds additional chlorophylls, carotenoids and specific lipids.. Post-translationally, tyr-160 forms a radical intermediate that is referred to as redox-active TyrZ, YZ or Y-Z.

The protein resides in the plastid. It localises to the chloroplast thylakoid membrane. It carries out the reaction 2 a plastoquinone + 4 hnu + 2 H2O = 2 a plastoquinol + O2. In terms of biological role, photosystem II (PSII) is a light-driven water:plastoquinone oxidoreductase that uses light energy to abstract electrons from H(2)O, generating O(2) and a proton gradient subsequently used for ATP formation. It consists of a core antenna complex that captures photons, and an electron transfer chain that converts photonic excitation into a charge separation. The D1/D2 (PsbA/PsbD) reaction center heterodimer binds P680, the primary electron donor of PSII as well as several subsequent electron acceptors. In Prorocentrum micans (Red tide dinoflagellate), this protein is Photosystem II protein D1.